A 463-amino-acid polypeptide reads, in one-letter code: Asparagine--tRNA ligase (463 aa).

This sequence belongs to the class-II aminoacyl-tRNA synthetase family. Homodimer.

Its subcellular location is the cytoplasm. The catalysed reaction is tRNA(Asn) + L-asparagine + ATP = L-asparaginyl-tRNA(Asn) + AMP + diphosphate + H(+). This chain is Asparagine--tRNA ligase, found in Bacillus cytotoxicus (strain DSM 22905 / CIP 110041 / 391-98 / NVH 391-98).